A 33-amino-acid chain; its full sequence is Photosystem II reaction center protein Psb30 (33 aa).

Residues 5-25 (VIAQLTVLSLIVLSGPLVIIL) traverse the membrane as a helical segment.

Belongs to the Psb30/Ycf12 family. As to quaternary structure, PSII is composed of 1 copy each of membrane proteins PsbA, PsbB, PsbC, PsbD, PsbE, PsbF, PsbH, PsbI, PsbJ, PsbK, PsbL, PsbM, PsbT, PsbX, PsbY, PsbZ, Psb30/Ycf12, peripheral proteins of the oxygen-evolving complex and a large number of cofactors. It forms dimeric complexes.

It is found in the plastid. It localises to the chloroplast thylakoid membrane. A core subunit of photosystem II (PSII), probably helps stabilize the reaction center. The chain is Photosystem II reaction center protein Psb30 from Chlorokybus atmophyticus (Soil alga).